Here is a 155-residue protein sequence, read N- to C-terminus: SsrA-binding protein (155 aa).

The protein belongs to the SmpB family.

The protein localises to the cytoplasm. Its function is as follows. Required for rescue of stalled ribosomes mediated by trans-translation. Binds to transfer-messenger RNA (tmRNA), required for stable association of tmRNA with ribosomes. tmRNA and SmpB together mimic tRNA shape, replacing the anticodon stem-loop with SmpB. tmRNA is encoded by the ssrA gene; the 2 termini fold to resemble tRNA(Ala) and it encodes a 'tag peptide', a short internal open reading frame. During trans-translation Ala-aminoacylated tmRNA acts like a tRNA, entering the A-site of stalled ribosomes, displacing the stalled mRNA. The ribosome then switches to translate the ORF on the tmRNA; the nascent peptide is terminated with the 'tag peptide' encoded by the tmRNA and targeted for degradation. The ribosome is freed to recommence translation, which seems to be the essential function of trans-translation. The polypeptide is SsrA-binding protein (Streptococcus pneumoniae serotype 4 (strain ATCC BAA-334 / TIGR4)).